Consider the following 116-residue polypeptide: Small ribosomal subunit protein uS13m (116 aa).

A disordered region spans residues 92-116 (HQDGSPLRGQRTHTNARTARKQIRK).

This sequence belongs to the universal ribosomal protein uS13 family. In terms of assembly, part of the small ribosomal subunit.

It localises to the mitochondrion. Its function is as follows. Located at the top of the head of the small subunit, it contacts several helices of the 18S rRNA. The protein is Small ribosomal subunit protein uS13m (RPS13) of Triticum aestivum (Wheat).